A 332-amino-acid polypeptide reads, in one-letter code: Aquaporin-7-1 (332 aa).

Over 1–66 (MSGQHQITEQ…RHAIRMPMAE (66 aa)) the chain is Cytoplasmic. Residues 67–87 (FFGVALLIIFGAGSACQVVLS) traverse the membrane as a helical segment. Over 88-100 (TNPNVASSDRGSF) the chain is Extracellular. Residues 101 to 121 (LSINLGWAIGIAMGAWVSGGI) traverse the membrane as a helical segment. Residues 122–144 (SGGHINPAITIAMATYRGFPWRR) lie on the Cytoplasmic side of the membrane. An NPA 1 motif is present at residues 127-129 (NPA). A helical membrane pass occupies residues 145–165 (VPSYIFAQVLGGVVGAALVYA). At 166–199 (NYIHAIDIFEGGRHVRTQATASLFATYALPYMTQ) the chain is on the extracellular side. Residues 200–220 (VSCFFSEFLATAVLSMMVLAL) traverse the membrane as a helical segment. The Cytoplasmic portion of the chain corresponds to 221–230 (TDNRNGAPTN). The chain crosses the membrane as a helical span at residues 231–251 (GLLPFALFVLFIGLGASLGME). The Extracellular segment spans residues 252 to 283 (TAYALNPARDFGPRLFLAMSGYGKALFNYRSQ). Residues 257–259 (NPA) carry the NPA 2 motif. Residues 284 to 304 (YWLWAPIIAPVLGAQAGGLLY) traverse the membrane as a helical segment. The Cytoplasmic portion of the chain corresponds to 305-332 (DTFLYDGDNSPIKWRRASSQECQLAEVV).

It belongs to the MIP/aquaporin (TC 1.A.8) family.

It is found in the membrane. The catalysed reaction is H2O(in) = H2O(out). In terms of biological role, water channel required to facilitate the transport of water across membranes. Does not mediate the transport carbon dioxide across the membrane. In Laccaria bicolor (Bicoloured deceiver), this protein is Aquaporin-7-1.